Consider the following 313-residue polypeptide: Ribosomal RNA small subunit methyltransferase H (313 aa).

Residues 35–37 (GGH), Asp55, Phe79, Asp100, and Gln107 contribute to the S-adenosyl-L-methionine site.

The protein belongs to the methyltransferase superfamily. RsmH family.

It localises to the cytoplasm. The enzyme catalyses cytidine(1402) in 16S rRNA + S-adenosyl-L-methionine = N(4)-methylcytidine(1402) in 16S rRNA + S-adenosyl-L-homocysteine + H(+). Its function is as follows. Specifically methylates the N4 position of cytidine in position 1402 (C1402) of 16S rRNA. This Burkholderia ambifaria (strain ATCC BAA-244 / DSM 16087 / CCUG 44356 / LMG 19182 / AMMD) (Burkholderia cepacia (strain AMMD)) protein is Ribosomal RNA small subunit methyltransferase H.